A 437-amino-acid polypeptide reads, in one-letter code: Keratin, type I cytoskeletal 13 (437 aa).

Positions 1 to 95 are head; that stretch reads MSCRFQSSSM…GVDGGLLSGN (95 aa). Omega-N-methylarginine is present on residues Arg27 and Arg35. The tract at residues 96 to 131 is coil 1A; sequence EKITMQNLNDRLASYLDKVRALEAANADLEVKIRDW. The IF rod domain occupies 96-408; sequence EKITMQNLND…SLLEGQDAKM (313 aa). The linker 1 stretch occupies residues 132 to 150; it reads HLKQSPASPERDYSAYYKT. The interval 151–242 is coil 1B; it reads IEELRIKILE…KNHEEEMKEF (92 aa). The linker 12 stretch occupies residues 243-265; sequence SNQVVGQVNVEMDATPGIDLTRV. The segment at 266–404 is coil 2; sequence LAEMREQYEA…ATYRSLLEGQ (139 aa). Positions 405–437 are tail; the sequence is DAKMTGFNSGGNNTTTSNGSPSSNSGRPDFRKY. The tract at residues 408-437 is disordered; sequence MTGFNSGGNNTTTSNGSPSSNSGRPDFRKY. The span at 409–430 shows a compositional bias: low complexity; the sequence is TGFNSGGNNTTTSNGSPSSNSG.

The protein belongs to the intermediate filament family. Heterotetramer of two type I and two type II keratins. Post-translationally, O-glycosylated; glycans consist of single N-acetylglucosamine residues. In terms of tissue distribution, expressed in tongue epithelia (at protein level). Expressed in upper suprabasal layers of the corneal epithelium (at protein level).

Functionally, type 1 keratin. Maintains postnatal tongue mucosal cell homeostasis and tissue organization in response to mechanical stress, potentially via regulation of the G1/S phase cyclins CCNE1 and CCNE2. In Mus musculus (Mouse), this protein is Keratin, type I cytoskeletal 13 (Krt13).